We begin with the raw amino-acid sequence, 103 residues long: Large ribosomal subunit protein uL24 (103 aa).

Belongs to the universal ribosomal protein uL24 family. As to quaternary structure, part of the 50S ribosomal subunit.

One of two assembly initiator proteins, it binds directly to the 5'-end of the 23S rRNA, where it nucleates assembly of the 50S subunit. Functionally, one of the proteins that surrounds the polypeptide exit tunnel on the outside of the subunit. The sequence is that of Large ribosomal subunit protein uL24 from Enterococcus faecalis (strain ATCC 700802 / V583).